A 188-amino-acid chain; its full sequence is MRRSKKERQKLLQQTIKSTPFITDEELAGKFGVSIQTIRLDRLELSIPELRERIKNVAEQTLDDEVKSLSLDEVIGEIIDLELDGQAISILEVRREHVFSRNQIARGHHLFAQANSLAVAVIDDELALTASANIRFTRQVKEGERVVAKAKVTAVEKEKGRTVVEVNSYVGEEVVFSGSFDMYRSKQS.

The protein belongs to the FapR family.

Its function is as follows. Transcriptional factor involved in regulation of membrane lipid biosynthesis by repressing genes involved in fatty acid and phospholipid metabolism. The sequence is that of Transcription factor FapR from Bacillus velezensis (strain DSM 23117 / BGSC 10A6 / LMG 26770 / FZB42) (Bacillus amyloliquefaciens subsp. plantarum).